A 581-amino-acid chain; its full sequence is Urease subunit alpha (581 aa).

The Urease domain maps to 134–581 (GGFDSHIHFI…LPMTQRYFLF (448 aa)). Ni(2+) contacts are provided by His-139, His-141, and Lys-222. An N6-carboxylysine modification is found at Lys-222. Position 224 (His-224) interacts with substrate. 2 residues coordinate Ni(2+): His-251 and His-277. His-325 acts as the Proton donor in catalysis. Position 365 (Asp-365) interacts with Ni(2+).

The protein belongs to the metallo-dependent hydrolases superfamily. Urease alpha subunit family. Heterotrimer of UreA (gamma), UreB (beta) and UreC (alpha) subunits. Three heterotrimers associate to form the active enzyme. Requires Ni cation as cofactor. Post-translationally, carboxylation allows a single lysine to coordinate two nickel ions.

Its subcellular location is the cytoplasm. The enzyme catalyses urea + 2 H2O + H(+) = hydrogencarbonate + 2 NH4(+). It participates in nitrogen metabolism; urea degradation; CO(2) and NH(3) from urea (urease route): step 1/1. In Albidiferax ferrireducens (strain ATCC BAA-621 / DSM 15236 / T118) (Rhodoferax ferrireducens), this protein is Urease subunit alpha.